A 216-amino-acid chain; its full sequence is ATP-dependent Clp protease proteolytic subunit (216 aa).

S101 functions as the Nucleophile in the catalytic mechanism. Residue H126 is part of the active site.

It belongs to the peptidase S14 family. Component of the chloroplastic Clp protease core complex.

It is found in the plastid. The protein resides in the chloroplast stroma. It catalyses the reaction Hydrolysis of proteins to small peptides in the presence of ATP and magnesium. alpha-casein is the usual test substrate. In the absence of ATP, only oligopeptides shorter than five residues are hydrolyzed (such as succinyl-Leu-Tyr-|-NHMec, and Leu-Tyr-Leu-|-Tyr-Trp, in which cleavage of the -Tyr-|-Leu- and -Tyr-|-Trp bonds also occurs).. In terms of biological role, cleaves peptides in various proteins in a process that requires ATP hydrolysis. Has a chymotrypsin-like activity. Plays a major role in the degradation of misfolded proteins. In Hordeum vulgare (Barley), this protein is ATP-dependent Clp protease proteolytic subunit.